A 757-amino-acid polypeptide reads, in one-letter code: Amine oxidase [copper-containing] 2 (757 aa).

At 1–4 (MNLK) the chain is on the cytoplasmic side. The helical transmembrane segment at 5–25 (VLLLLLGLSFLTVFALVYVLL) threads the bilayer. The Extracellular portion of the chain corresponds to 26 to 757 (TRQGSFSQSP…NLPSFSYEGL (732 aa)). Residues N133, N198, and N226 are each glycosylated (N-linked (GlcNAc...) asparagine). Residue D381 is the Proton acceptor of the active site. C399 and C425 are oxidised to a cystine. Y466 functions as the Schiff-base intermediate with substrate; via topaquinone in the catalytic mechanism. Y466 carries the 2',4',5'-topaquinone modification. Cu(2+) is bound by residues H517 and H519. 7 residues coordinate Ca(2+): D526, L527, D528, E569, E638, F660, and N662. An N-linked (GlcNAc...) asparagine glycan is attached at N663. Ca(2+)-binding residues include E664, D670, and L671. Cu(2+) is bound at residue H681. C731 and C738 are oxidised to a cystine.

It belongs to the copper/topaquinone oxidase family. Homodimer; disulfide-linked. Probably forms heterodimers with AOC3. It depends on Cu(2+) as a cofactor. Ca(2+) is required as a cofactor. L-topaquinone serves as cofactor. Topaquinone (TPQ) is generated by copper-dependent autoxidation of a specific tyrosyl residue. As to expression, significantly much highly expressed in retina.

The protein localises to the cell membrane. It catalyses the reaction 2-phenylethylamine + O2 + H2O = 2-phenylacetaldehyde + H2O2 + NH4(+). The enzyme catalyses tryptamine + O2 + H2O = indole-3-acetaldehyde + H2O2 + NH4(+). It carries out the reaction tyramine + O2 + H2O = (4-hydroxyphenyl)acetaldehyde + H2O2 + NH4(+). Functionally, catalyzes the oxidative deamination of primary amines to the corresponding aldehydes with the concomitant production of hydrogen peroxide and ammonia. Has a preference for 2-phenylethylamine, tryptamine and tyramine. Could also act on methylamine and benzylamine but much less efficiently. This Mus musculus (Mouse) protein is Amine oxidase [copper-containing] 2.